The following is a 378-amino-acid chain: Cytochrome b (378 aa).

A run of 4 helical transmembrane segments spans residues 34 to 54 (FGSL…FLAM), 78 to 99 (WFLR…FIHV), 114 to 134 (WNTG…GYVL), and 179 to 199 (FFTF…IHLL). H84 and H98 together coordinate heme b. Heme b contacts are provided by H183 and H197. H202 provides a ligand contact to a ubiquinone. A run of 4 helical transmembrane segments spans residues 227-247 (YKDI…IWKF), 289-309 (LGGV…PFTH), 321-341 (LNQI…WIGA), and 348-368 (YILT…INPL).

It belongs to the cytochrome b family. The main subunits of complex b-c1 are: cytochrome b, cytochrome c1 and the Rieske protein. Requires heme b as cofactor.

The protein localises to the mitochondrion inner membrane. Its function is as follows. Component of the ubiquinol-cytochrome c reductase complex (complex III or cytochrome b-c1 complex) that is part of the mitochondrial respiratory chain. The b-c1 complex mediates electron transfer from ubiquinol to cytochrome c. Contributes to the generation of a proton gradient across the mitochondrial membrane that is then used for ATP synthesis. This Anopheles gambiae (African malaria mosquito) protein is Cytochrome b (mt:Cyt-b).